The following is a 196-amino-acid chain: DnaA initiator-associating protein DiaA (196 aa).

The SIS domain occupies Leu-34 to Asp-196.

This sequence belongs to the SIS family. DiaA subfamily. As to quaternary structure, homotetramer; dimer of dimers.

Required for the timely initiation of chromosomal replication via direct interactions with the DnaA initiator protein. The polypeptide is DnaA initiator-associating protein DiaA (Shigella boydii serotype 18 (strain CDC 3083-94 / BS512)).